The chain runs to 463 residues: Adenosylhomocysteinase (463 aa).

3 residues coordinate substrate: threonine 54, aspartate 128, and glutamate 189. 190-192 is an NAD(+) binding site; it reads TTT. Positions 219 and 223 each coordinate substrate. NAD(+) contacts are provided by residues asparagine 224, 253 to 258, glutamate 276, asparagine 311, 332 to 334, and asparagine 377; these read GYGDVG and IGH.

It belongs to the adenosylhomocysteinase family. Homotetramer. NAD(+) is required as a cofactor.

It localises to the cytoplasm. It carries out the reaction S-adenosyl-L-homocysteine + H2O = L-homocysteine + adenosine. It functions in the pathway amino-acid biosynthesis; L-homocysteine biosynthesis; L-homocysteine from S-adenosyl-L-homocysteine: step 1/1. May play a key role in the regulation of the intracellular concentration of adenosylhomocysteine. The sequence is that of Adenosylhomocysteinase from Rhodobacter capsulatus (strain ATCC BAA-309 / NBRC 16581 / SB1003).